Reading from the N-terminus, the 414-residue chain is ORC1-type DNA replication protein 1 (414 aa).

Residues 70–74 (TGKTA), tyrosine 213, and arginine 225 each bind ATP.

The protein belongs to the CDC6/cdc18 family.

Its function is as follows. Involved in regulation of DNA replication. The sequence is that of ORC1-type DNA replication protein 1 (cdc6-1) from Methanosarcina acetivorans (strain ATCC 35395 / DSM 2834 / JCM 12185 / C2A).